A 140-amino-acid chain; its full sequence is Lymphocyte antigen 6H (140 aa).

An N-terminal signal peptide occupies residues 1-25; it reads MLPAAMKGLGLALLAVLLCSAPAHG. Positions 26-91 constitute a UPAR/Ly6 domain; sequence LWCQDCTLTT…RHFFSDYLMG (66 aa). Cystine bridges form between Cys-28/Cys-52, Cys-31/Cys-40, Cys-45/Cys-73, and Cys-77/Cys-104. N-linked (GlcNAc...) asparagine glycosylation is present at Asn-36. Gly-115 carries the GPI-anchor amidated glycine lipid modification. The propeptide at 116 to 140 is removed in mature form; the sequence is AGHSPWALAGGLLLSLGPALLWAGP.

In terms of assembly, interacts with CHRNA4 and CHRNA7.

It localises to the cell membrane. Functionally, believed to act as a modulator of nicotinic acetylcholine receptors (nAChRs) activity. In vitro inhibits alpha-3:beta-4-containing nAChRs maximum response. May play a role in the intracellular trafficking of alpha-7-containing nAChRs and may inhibit their expression at the cell surface. Seems to inhibit alpha-7/CHRNA7 signaling in hippocampal neurons. This Macaca fascicularis (Crab-eating macaque) protein is Lymphocyte antigen 6H (LY6H).